A 459-amino-acid chain; its full sequence is Serine carboxypeptidase-like 27 (459 aa).

The first 20 residues, 1 to 20 (MDYSFLLIILLLTISTSCCA), serve as a signal peptide directing secretion. 3 disulfide bridges follow: Cys91–Cys344, Cys252–Cys264, and Cys288–Cys312. The N-linked (GlcNAc...) asparagine glycan is linked to Asn142. Ser184 is a catalytic residue. Residues Asn289 and Asn333 are each glycosylated (N-linked (GlcNAc...) asparagine). Residues Asp381 and His433 contribute to the active site.

Belongs to the peptidase S10 family. In terms of tissue distribution, ubiquitous.

Its subcellular location is the secreted. Its function is as follows. Probable carboxypeptidase. This Arabidopsis thaliana (Mouse-ear cress) protein is Serine carboxypeptidase-like 27 (SCPL27).